The primary structure comprises 294 residues: UDP-3-O-acyl-N-acetylglucosamine deacetylase (294 aa).

Zn(2+)-binding residues include histidine 75, histidine 232, and aspartate 236. Histidine 259 serves as the catalytic Proton donor.

The protein belongs to the LpxC family. Zn(2+) serves as cofactor.

The enzyme catalyses a UDP-3-O-[(3R)-3-hydroxyacyl]-N-acetyl-alpha-D-glucosamine + H2O = a UDP-3-O-[(3R)-3-hydroxyacyl]-alpha-D-glucosamine + acetate. Its pathway is glycolipid biosynthesis; lipid IV(A) biosynthesis; lipid IV(A) from (3R)-3-hydroxytetradecanoyl-[acyl-carrier-protein] and UDP-N-acetyl-alpha-D-glucosamine: step 2/6. Its function is as follows. Catalyzes the hydrolysis of UDP-3-O-myristoyl-N-acetylglucosamine to form UDP-3-O-myristoylglucosamine and acetate, the committed step in lipid A biosynthesis. The protein is UDP-3-O-acyl-N-acetylglucosamine deacetylase of Campylobacter lari (strain RM2100 / D67 / ATCC BAA-1060).